The following is a 131-amino-acid chain: MGSCVGKERSDEEDKIDFKGGNVHVISNKENWDHKIAEANKDGKIVIANFSAAWCGPCRVIAPVYAEMSQTYPQFMFLTIDVDELMDFSSSWDIRATPTFFFLKNGEQVDKLVGANKPELEKKVAALADSA.

Residues 3–129 (SCVGKERSDE…LEKKVAALAD (127 aa)) enclose the Thioredoxin domain. Active-site nucleophile residues include C55 and C58. C55 and C58 are oxidised to a cystine.

It belongs to the thioredoxin family. Plant H-type subfamily.

Its subcellular location is the cytoplasm. In terms of biological role, probable thiol-disulfide oxidoreductase that may be involved in the redox regulation of a number of cytosolic enzymes. This Oryza sativa subsp. japonica (Rice) protein is Thioredoxin H4-1.